The following is a 246-amino-acid chain: Uridylate kinase (246 aa).

10–13 (KLSG) contacts ATP. UMP is bound at residue G52. Positions 53 and 57 each coordinate ATP. UMP-binding positions include D72 and 133 to 140 (TGNPFFTT). ATP contacts are provided by T160, Y166, and D169.

Belongs to the UMP kinase family. As to quaternary structure, homohexamer.

It is found in the cytoplasm. The enzyme catalyses UMP + ATP = UDP + ADP. Its pathway is pyrimidine metabolism; CTP biosynthesis via de novo pathway; UDP from UMP (UMPK route): step 1/1. Its activity is regulated as follows. Inhibited by UTP. Catalyzes the reversible phosphorylation of UMP to UDP. This is Uridylate kinase from Halorhodospira halophila (strain DSM 244 / SL1) (Ectothiorhodospira halophila (strain DSM 244 / SL1)).